Here is an 816-residue protein sequence, read N- to C-terminus: Sucrose synthase 1 (816 aa).

The segment at 280-757 is GT-B glycosyltransferase; it reads MVFNVVIMSP…GLQRIEEKYT (478 aa).

It belongs to the glycosyltransferase 1 family. Plant sucrose synthase subfamily. Homotetramer or heterotetramer with SUS2. As to expression, expressed in root phloem and leaf mesophyll. Expressed in phloem tissues and aleurone layers of seeds and at lower levels in the pericarp and endosperm cells (at protein level). Predominantly expressed in elongating tissues including roots, developing leaves and internodes.

It carries out the reaction an NDP-alpha-D-glucose + D-fructose = a ribonucleoside 5'-diphosphate + sucrose + H(+). In terms of biological role, sucrose-cleaving enzyme that provides UDP-glucose and fructose for various metabolic pathways. This is Sucrose synthase 1 (SUS1) from Oryza sativa subsp. japonica (Rice).